The following is a 263-amino-acid chain: 4-hydroxy-tetrahydrodipicolinate reductase (263 aa).

NAD(+) is bound by residues 7-12 (GFKGRM), 96-98 (GTT), and 122-125 (APNF). His152 (proton donor/acceptor) is an active-site residue. A (S)-2,3,4,5-tetrahydrodipicolinate-binding site is contributed by His153. Lys156 (proton donor) is an active-site residue. A (S)-2,3,4,5-tetrahydrodipicolinate-binding site is contributed by 162–163 (GT).

Belongs to the DapB family.

It is found in the cytoplasm. It catalyses the reaction (S)-2,3,4,5-tetrahydrodipicolinate + NAD(+) + H2O = (2S,4S)-4-hydroxy-2,3,4,5-tetrahydrodipicolinate + NADH + H(+). The enzyme catalyses (S)-2,3,4,5-tetrahydrodipicolinate + NADP(+) + H2O = (2S,4S)-4-hydroxy-2,3,4,5-tetrahydrodipicolinate + NADPH + H(+). The protein operates within amino-acid biosynthesis; L-lysine biosynthesis via DAP pathway; (S)-tetrahydrodipicolinate from L-aspartate: step 4/4. Catalyzes the conversion of 4-hydroxy-tetrahydrodipicolinate (HTPA) to tetrahydrodipicolinate. The sequence is that of 4-hydroxy-tetrahydrodipicolinate reductase from Listeria welshimeri serovar 6b (strain ATCC 35897 / DSM 20650 / CCUG 15529 / CIP 8149 / NCTC 11857 / SLCC 5334 / V8).